Here is a 160-residue protein sequence, read N- to C-terminus: Large ribosomal subunit protein bL19 (160 aa).

Basic and acidic residues-rich tracts occupy residues 1–15 and 28–39; these read MTEDLKNTSPSKEES and ATRETKPKDSPS. Residues 1-44 form a disordered region; sequence MTEDLKNTSPSKEESNEIEESSKATPKATRETKPKDSPSKTKLS.

This sequence belongs to the bacterial ribosomal protein bL19 family.

This protein is located at the 30S-50S ribosomal subunit interface and may play a role in the structure and function of the aminoacyl-tRNA binding site. The polypeptide is Large ribosomal subunit protein bL19 (Prochlorococcus marinus (strain SARG / CCMP1375 / SS120)).